The sequence spans 177 residues: Large ribosomal subunit protein uL6 (177 aa).

This sequence belongs to the universal ribosomal protein uL6 family. In terms of assembly, part of the 50S ribosomal subunit.

This protein binds to the 23S rRNA, and is important in its secondary structure. It is located near the subunit interface in the base of the L7/L12 stalk, and near the tRNA binding site of the peptidyltransferase center. This chain is Large ribosomal subunit protein uL6, found in Rhizobium leguminosarum bv. trifolii (strain WSM2304).